We begin with the raw amino-acid sequence, 278 residues long: MKTKTDFLKMKEQGEPITMLTAYDYPSAKLAEEAEVDMILVGDSLGMVVLGYDSTVPVTVEDMIHHTKAVRRGAKETFIVTDMPFMSYHVSLQETMVNARRIVQESGAHALKVEGAGEVISTIQYLTNAGIPVVAHLGLTPQSVGVLGGYKVQGKDAESAKKLIEDAKKCEEAGAIALVLECVPMQLAELISEQLTIPTIGIGAGQKVDGQVLVYHDLISYGVNRVPKFVKQYTSVQEEIVRGISQYVTEVKTRQFPEEKHSFTMKEEECLSLYGGKQ.

2 residues coordinate Mg(2+): D43 and D82. Residues D43–S44, D82, and K112 contribute to the 3-methyl-2-oxobutanoate site. Position 114 (E114) interacts with Mg(2+). The active-site Proton acceptor is E181.

Belongs to the PanB family. As to quaternary structure, homodecamer; pentamer of dimers. Requires Mg(2+) as cofactor.

The protein resides in the cytoplasm. The enzyme catalyses 3-methyl-2-oxobutanoate + (6R)-5,10-methylene-5,6,7,8-tetrahydrofolate + H2O = 2-dehydropantoate + (6S)-5,6,7,8-tetrahydrofolate. It functions in the pathway cofactor biosynthesis; (R)-pantothenate biosynthesis; (R)-pantoate from 3-methyl-2-oxobutanoate: step 1/2. Functionally, catalyzes the reversible reaction in which hydroxymethyl group from 5,10-methylenetetrahydrofolate is transferred onto alpha-ketoisovalerate to form ketopantoate. This chain is 3-methyl-2-oxobutanoate hydroxymethyltransferase, found in Bacillus cereus (strain ATCC 14579 / DSM 31 / CCUG 7414 / JCM 2152 / NBRC 15305 / NCIMB 9373 / NCTC 2599 / NRRL B-3711).